The chain runs to 886 residues: Neurotrophin 1 (886 aa).

Positions 1–29 (MKAGRAFGCLFWALLYCVLYLDLVSGNSA) are cleaved as a signal peptide. Positions 30 to 498 (DDELMDFDFA…FDDFSLSKKR (469 aa)) are excised as a propeptide. N-linked (GlcNAc...) asparagine glycans are attached at residues asparagine 267 and asparagine 317. The tract at residues 321 to 340 (FQQPSSQEEEKMASSNGGQS) is disordered. N-linked (GlcNAc...) asparagine glycosylation occurs at asparagine 353. A disordered region spans residues 369–436 (RNSAEETEEP…HKPVVTPPNK (68 aa)). Positions 508 to 597 (MCQSVVRYAR…KVPTCCSCQV (90 aa)) constitute a Spaetzle domain. Cystine bridges form between cysteine 509–cysteine 564, cysteine 546–cysteine 593, and cysteine 553–cysteine 595. A glycan (N-linked (GlcNAc...) asparagine) is linked at asparagine 623. Disordered stretches follow at residues 675 to 754 (PGIS…QYHR) and 789 to 886 (VSAP…QSIQ). The segment covering 698–710 (YKSSSSSSKKYYS) has biased composition (low complexity). A compositionally biased stretch (pro residues) spans 797-807 (PAPPLPMPPMP). Composition is skewed to basic residues over residues 815–827 (HQAH…HHLH) and 874–886 (SRRH…QSIQ).

Homodimer; disulfide-linked. As to expression, detected in the fan-shaped body which is a component of the locomotion center in the central nervous system (CNS) (at protein level). Expressed in the optic lobes and brain.

Its function is as follows. Neurotrophin which may function as a ligand for the Toll-related receptors Toll-7 and Tollo. Binds to Toll-7 and probably acts as its ligand in promoting motor axon targeting and neuronal survival in the central nervous system (CNS). Involved in synaptic targeting of ISNb/d motorneurons and also some SNa motorneurons. In larvae, involved in the negative regulation of the tracheal immune response to bacterial infection perhaps by acting as a ligand for the Toll-related receptor Tollo. May be involved in the normal development of specific neurons at the neuromuscular junction. In Drosophila melanogaster (Fruit fly), this protein is Neurotrophin 1.